Consider the following 121-residue polypeptide: Phosphoribosyl-AMP cyclohydrolase (121 aa).

Aspartate 76 lines the Mg(2+) pocket. Zn(2+) is bound at residue cysteine 77. Residues aspartate 78 and aspartate 80 each coordinate Mg(2+). Cysteine 93 and cysteine 100 together coordinate Zn(2+).

The protein belongs to the PRA-CH family. In terms of assembly, homodimer. Mg(2+) serves as cofactor. It depends on Zn(2+) as a cofactor.

The protein localises to the cytoplasm. It catalyses the reaction 1-(5-phospho-beta-D-ribosyl)-5'-AMP + H2O = 1-(5-phospho-beta-D-ribosyl)-5-[(5-phospho-beta-D-ribosylamino)methylideneamino]imidazole-4-carboxamide. It functions in the pathway amino-acid biosynthesis; L-histidine biosynthesis; L-histidine from 5-phospho-alpha-D-ribose 1-diphosphate: step 3/9. Its function is as follows. Catalyzes the hydrolysis of the adenine ring of phosphoribosyl-AMP. The sequence is that of Phosphoribosyl-AMP cyclohydrolase from Paracoccus denitrificans (strain Pd 1222).